A 211-amino-acid chain; its full sequence is Ras-related protein rab-11.1 (211 aa).

Residue 18-26 (GDSGVGKSN) coordinates GTP. Positions 40-48 (SKSTIGVEF) match the Effector region motif. Residues 66–70 (DTAGQ), 124–127 (NKSD), and 154–156 (SAL) each bind GTP. Residues 187-211 (GYGGGSGTIIPSPASDPPKKQCCIP) are disordered. S-geranylgeranyl cysteine attachment occurs at residues Cys-208 and Cys-209.

This sequence belongs to the small GTPase superfamily. Rab family. As to quaternary structure, interacts with rei-1 and rei-2. The GDP-form preferentially binds to rei-1 and rei-2. In terms of tissue distribution, expressed weakly in sperm, but more predominantly in oocytes. Expressed in the intestine.

Its subcellular location is the cytoplasmic vesicle. The protein resides in the secretory vesicle. It localises to the endosome. It is found in the cytoplasm. The protein localises to the cytoskeleton. Its subcellular location is the spindle. The protein resides in the microtubule organizing center. It localises to the spindle pole body. It is found in the centrosome. The protein localises to the apical cell membrane. Its subcellular location is the cytosol. The protein resides in the recycling endosome membrane. It localises to the golgi apparatus membrane. It is found in the cytoplasmic granule. Its function is as follows. The small GTPases Rab are key regulators of intracellular membrane trafficking, from the formation of transport vesicles to their fusion with membranes. Rabs cycle between an inactive GDP-bound form and an active GTP-bound form that is able to recruit to membranes different set of downstream effectors directly responsible for vesicle formation, movement, tethering and fusion. Involved in regulating the meiotic maturation of oocytes. Plays a role in egg shell formation, regulating exocytosis of chondroitin proteoglycans following fertilization. Controls cortical granule localization and targets them to the plasma membrane for exocytosis. Acts as a major regulator of membrane delivery during cytokinesis. Regulates the cytoskeleton by facilitating astral microtubule elongation and organization during metaphase to ensure proper spindle alignment and polarity in the first embryonic cell division. Maintains normal endoplasmic reticulum morphology during metaphase. Involved in vesicle formation and plasma membrane repair following exposure to pore forming toxins. Regulates endocytic recycling. May play a role in yolk receptor endocytosis in growing oocytes. Plays a role in the shedding of pathogen spores from intestinal cells via its involvement in spore fusion and endocytic trafficking. The polypeptide is Ras-related protein rab-11.1 (Caenorhabditis elegans).